A 269-amino-acid chain; its full sequence is Hydroxyethylthiazole kinase (269 aa).

Met-48 contacts substrate. Residues Lys-124 and Thr-170 each contribute to the ATP site. Gly-197 is a substrate binding site.

This sequence belongs to the Thz kinase family. Mg(2+) serves as cofactor.

It catalyses the reaction 5-(2-hydroxyethyl)-4-methylthiazole + ATP = 4-methyl-5-(2-phosphooxyethyl)-thiazole + ADP + H(+). Its pathway is cofactor biosynthesis; thiamine diphosphate biosynthesis; 4-methyl-5-(2-phosphoethyl)-thiazole from 5-(2-hydroxyethyl)-4-methylthiazole: step 1/1. In terms of biological role, catalyzes the phosphorylation of the hydroxyl group of 4-methyl-5-beta-hydroxyethylthiazole (THZ). The protein is Hydroxyethylthiazole kinase of Clostridium kluyveri (strain NBRC 12016).